We begin with the raw amino-acid sequence, 304 residues long: Ring-infected erythrocyte surface antigen (304 aa).

N-linked (GlcNAc...) asparagine glycosylation is found at Asn-18 and Asn-22. Residues 142–159 show a composition bias toward basic and acidic residues; it reads EHDAEENVEHDAEENVEH. The interval 142–304 is disordered; the sequence is EHDAEENVEH…EENVEEHNGI (163 aa). Residues 160–298 show a composition bias toward acidic residues; sequence DAEENAEENV…NVEEYDEENV (139 aa).

Its subcellular location is the cell membrane. In terms of biological role, may disrupt the normal intermolecular interactions of the cytoplasmic domain of band 3 and thereby facilitate the invagination of the red cell membrane which is necessary for the formation of the parasitophorous vacuole. The sequence is that of Ring-infected erythrocyte surface antigen (RESA) from Plasmodium falciparum (isolate Palo Alto / Uganda).